The following is a 218-amino-acid chain: Ribose-5-phosphate isomerase A (218 aa).

Substrate is bound by residues 28-31, 81-84, and 94-97; these read TGST, DGAD, and KGGG. The active-site Proton acceptor is Glu103. Lys121 provides a ligand contact to substrate.

It belongs to the ribose 5-phosphate isomerase family. In terms of assembly, homodimer.

The enzyme catalyses aldehydo-D-ribose 5-phosphate = D-ribulose 5-phosphate. It functions in the pathway carbohydrate degradation; pentose phosphate pathway; D-ribose 5-phosphate from D-ribulose 5-phosphate (non-oxidative stage): step 1/1. In terms of biological role, catalyzes the reversible conversion of ribose-5-phosphate to ribulose 5-phosphate. The chain is Ribose-5-phosphate isomerase A from Shewanella sediminis (strain HAW-EB3).